The sequence spans 1459 residues: Mediator of RNA polymerase II transcription subunit 14 (1459 aa).

The segment at 1-37 is disordered; it reads MAPVQLDNHQLIPPGGGGGSSGGGGSSSGSASAPAPP. The span at 14–27 shows a compositional bias: gly residues; that stretch reads PGGGGGSSGGGGSS. The short motif at 75–79 is the LXXLL motif 1 element; sequence LTDLL. The segment at 194-572 is interaction with STAT2; that stretch reads KQATLHQLNQ…VPNKPTQLSY (379 aa). The interval 506–830 is interaction with SREBF1; sequence LGQQRCKQSI…TKGSSISIQW (325 aa). Serine 623 and serine 992 each carry phosphoserine. The interval 979–1171 is disordered; the sequence is ARRRSVNEDD…NMPPPRKLPQ (193 aa). Composition is skewed to polar residues over residues 1029–1059 and 1097–1106; these read PPTS…SSPS and DPSSPYTMVS. Phosphoserine occurs at positions 1117, 1124, 1133, 1141, and 1149. The span at 1152–1161 shows a compositional bias: polar residues; the sequence is AGTSSQTMPT. Residues 1187–1191 carry the LXXLL motif 2 motif; sequence LNILL.

It belongs to the Mediator complex subunit 14 family. In terms of assembly, component of the Mediator complex, which is composed of MED1, MED4, MED6, MED7, MED8, MED9, MED10, MED11, MED12, MED13, MED13L, MED14, MED15, MED16, MED17, MED18, MED19, MED20, MED21, MED22, MED23, MED24, MED25, MED26, MED27, MED29, MED30, MED31, CCNC, CDK8 and CDC2L6/CDK11. The MED12, MED13, CCNC and CDK8 subunits form a distinct module termed the CDK8 module. Mediator containing the CDK8 module is less active than Mediator lacking this module in supporting transcriptional activation. Individual preparations of the Mediator complex lacking one or more distinct subunits have been variously termed ARC, CRSP, DRIP, PC2, SMCC and TRAP. Interacts with AR, ESR1, SREBF1 and STAT2. Interacts with GATA1.

Its subcellular location is the nucleus. Functionally, component of the Mediator complex, a coactivator involved in the regulated transcription of nearly all RNA polymerase II-dependent genes. Mediator functions as a bridge to convey information from gene-specific regulatory proteins to the basal RNA polymerase II transcription machinery. Mediator is recruited to promoters by direct interactions with regulatory proteins and serves as a scaffold for the assembly of a functional preinitiation complex with RNA polymerase II and the general transcription factors. This is Mediator of RNA polymerase II transcription subunit 14 (Med14) from Mus musculus (Mouse).